The chain runs to 339 residues: NADH-quinone oxidoreductase subunit H (339 aa).

The next 9 membrane-spanning stretches (helical) occupy residues 9 to 29, 50 to 70, 82 to 102, 115 to 135, 161 to 181, 187 to 207, 235 to 255, 275 to 295, and 311 to 331; these read IFPL…LILC, PNVV…KLLF, ILFI…WAVI, VGVL…IIAG, MGLV…SEII, MPWW…ISVL, MGFA…SAMT, IPGF…FLWI, and GWKV…SVLV.

Belongs to the complex I subunit 1 family. In terms of assembly, NDH-1 is composed of 14 different subunits. Subunits NuoA, H, J, K, L, M, N constitute the membrane sector of the complex.

Its subcellular location is the cell inner membrane. The enzyme catalyses a quinone + NADH + 5 H(+)(in) = a quinol + NAD(+) + 4 H(+)(out). Functionally, NDH-1 shuttles electrons from NADH, via FMN and iron-sulfur (Fe-S) centers, to quinones in the respiratory chain. The immediate electron acceptor for the enzyme in this species is believed to be ubiquinone. Couples the redox reaction to proton translocation (for every two electrons transferred, four hydrogen ions are translocated across the cytoplasmic membrane), and thus conserves the redox energy in a proton gradient. This subunit may bind ubiquinone. This chain is NADH-quinone oxidoreductase subunit H, found in Rickettsia peacockii (strain Rustic).